A 55-amino-acid chain; its full sequence is Small polypeptide DEVIL 10 (55 aa).

Residue asparagine 7 is glycosylated (N-linked (GlcNAc...) asparagine). Residues 19–50 are required for DVL/RTFL small polypeptide activity; it reads RFGDRCLLMAKQQRTRLYILRRCVSMLLCWHD. A helical transmembrane segment spans residues 32–48; sequence RTRLYILRRCVSMLLCW.

The protein belongs to the DVL/RTFL small polypeptides family.

The protein localises to the cell membrane. Its function is as follows. Small polypeptide acting as a regulatory molecule which coordinates cellular responses required for differentiation, growth and development, probably by restricting polar cell proliferation in lateral organs and coordinating socket cell recruitment and differentiation at trichome sites. This chain is Small polypeptide DEVIL 10, found in Arabidopsis thaliana (Mouse-ear cress).